Reading from the N-terminus, the 310-residue chain is Ribosomal RNA small subunit methyltransferase H (310 aa).

S-adenosyl-L-methionine contacts are provided by residues 32 to 34, Asp52, Phe79, Asp100, and Gln107; that span reads GGH.

The protein belongs to the methyltransferase superfamily. RsmH family.

It is found in the cytoplasm. It catalyses the reaction cytidine(1402) in 16S rRNA + S-adenosyl-L-methionine = N(4)-methylcytidine(1402) in 16S rRNA + S-adenosyl-L-homocysteine + H(+). In terms of biological role, specifically methylates the N4 position of cytidine in position 1402 (C1402) of 16S rRNA. This chain is Ribosomal RNA small subunit methyltransferase H, found in Bacillus anthracis (strain A0248).